A 594-amino-acid polypeptide reads, in one-letter code: Microtubule-associated protein VP8 (594 aa).

The protein localises to the virion. It is found in the host cytoplasm. The protein resides in the host cytoskeleton. Minor inner capsid component. Displays NTPase and RNA 5'-triphosphatase (RTPase) activities. May function as a cofactor of polymerase VP1. Associates with microtubules and plays a role in the formation, structural organization and morphology of viral inclusions, where the assembly of cores and the replication of viral RNA occur. In Saccharum officinarum (Sugarcane), this protein is Microtubule-associated protein VP8 (S8).